Consider the following 229-residue polypeptide: MSPNLSRLERKLGHSFKDQDLMILALTHRSFAGRNNERLEFLGDAILNFVAGEALFERFPQAREGQLSRLRARLVKGETLAVLARGFELGEYLRLGSGELKSGGFRRESILADALEALIGAIYLDAGMDAARERVLDWLSGELDGLTLIDTNKDPKTRLQEFLQSRACELPRYEVVDIQGEPHCRTFMVECQVALLNEKTLGQGGSRRIAEQVAAAAALIALGVENGND.

One can recognise an RNase III domain in the interval 5-127; that stretch reads LSRLERKLGH…LIGAIYLDAG (123 aa). E40 serves as a coordination point for Mg(2+). D44 is an active-site residue. 2 residues coordinate Mg(2+): D113 and E116. E116 is an active-site residue. The region spanning 154-224 is the DRBM domain; sequence DPKTRLQEFL…AAAALIALGV (71 aa).

The protein belongs to the ribonuclease III family. As to quaternary structure, homodimer. Mg(2+) is required as a cofactor.

It localises to the cytoplasm. It catalyses the reaction Endonucleolytic cleavage to 5'-phosphomonoester.. Its function is as follows. Digests double-stranded RNA. Involved in the processing of primary rRNA transcript to yield the immediate precursors to the large and small rRNAs (23S and 16S). Processes some mRNAs, and tRNAs when they are encoded in the rRNA operon. Processes pre-crRNA and tracrRNA of type II CRISPR loci if present in the organism. The sequence is that of Ribonuclease 3 from Ectopseudomonas mendocina (strain ymp) (Pseudomonas mendocina).